The sequence spans 49 residues: Lectin alpha chain (49 aa).

The protein belongs to the leguminous lectin family. In terms of assembly, homotetramer. Post-translationally, the beta and gamma chains are produced by partial proteolytic processing of the lectin alpha chain by an asparaginyl endopeptidase. Mixture of 60% alpha lectin and 40% of its beta and gamma proteolytic fragments. Seed.

Functionally, D-mannose/D-glucose-binding lectin. The sequence is that of Lectin alpha chain from Dioclea violacea.